Reading from the N-terminus, the 307-residue chain is Serine/threonine-protein phosphatase 4 catalytic subunit B (307 aa).

Mn(2+) is bound by residues Asp54, His56, Asp82, and Asn114. His115 serves as the catalytic Proton donor. Mn(2+) contacts are provided by His164 and His238. A Leucine methyl ester modification is found at Leu307.

The protein belongs to the PPP phosphatase family. PP-4 (PP-X) subfamily. In terms of assembly, serine/threonine-protein phosphatase 4 (PP4) occurs in different assemblies of the catalytic and one or more regulatory subunits. Mn(2+) is required as a cofactor.

It is found in the cytoplasm. The protein resides in the cytoskeleton. The protein localises to the microtubule organizing center. Its subcellular location is the centrosome. It carries out the reaction O-phospho-L-seryl-[protein] + H2O = L-seryl-[protein] + phosphate. It catalyses the reaction O-phospho-L-threonyl-[protein] + H2O = L-threonyl-[protein] + phosphate. Its function is as follows. Protein phosphatase that regulates many processes such as microtubule organization at centrosomes. This chain is Serine/threonine-protein phosphatase 4 catalytic subunit B (ppp4cb), found in Danio rerio (Zebrafish).